A 514-amino-acid chain; its full sequence is Peptide chain release factor 3 (514 aa).

The tr-type G domain occupies 8–268 (KKRRTFAIIS…TFLEFAPEPH (261 aa)). Residues 17–24 (SHPDAGKT), 85–89 (DTPGH), and 139–142 (NKLD) each bind GTP.

The protein belongs to the TRAFAC class translation factor GTPase superfamily. Classic translation factor GTPase family. PrfC subfamily.

It is found in the cytoplasm. In terms of biological role, increases the formation of ribosomal termination complexes and stimulates activities of RF-1 and RF-2. It binds guanine nucleotides and has strong preference for UGA stop codons. It may interact directly with the ribosome. The stimulation of RF-1 and RF-2 is significantly reduced by GTP and GDP, but not by GMP. This Streptococcus agalactiae serotype Ia (strain ATCC 27591 / A909 / CDC SS700) protein is Peptide chain release factor 3.